The chain runs to 33 residues: Ice-structuring protein GS-5 (33 aa).

Met-1 bears the Blocked amino end (Met) mark.

The protein belongs to the type-I AFP family.

Its function is as follows. Antifreeze proteins lower the blood freezing point. This is Ice-structuring protein GS-5 from Myoxocephalus aenaeus (Grubby sculpin).